Consider the following 538-residue polypeptide: Atos homolog protein B (538 aa).

Low complexity predominate over residues 1 to 18; it reads MRHVQAEPSPSSEPEAGP. Disordered stretches follow at residues 1–103, 156–185, and 197–308; these read MRHV…GLLG, HTRD…QLHT, and GGKS…PMGR. Residues 227 to 238 show a composition bias toward pro residues; sequence HTPPGPGPPGPC. Phosphoserine occurs at positions 254 and 255. Over residues 274–286 the composition is skewed to polar residues; it reads AANSSDAKATSFW. The segment at 348 to 430 is required for macropage invasion; the sequence is LLGNFEESLL…VPKVGTVQVT (83 aa). The segment at 436–444 is transactivation domain 1 (TAD1); the sequence is QTVVKMFLV.

This sequence belongs to the ATOS family.

The protein localises to the nucleus. In terms of biological role, transcription regulator that may syncronize transcriptional and translational programs. This chain is Atos homolog protein B, found in Macaca fascicularis (Crab-eating macaque).